Reading from the N-terminus, the 201-residue chain is CASP-like protein 1E1 (201 aa).

At 1-36 (MESQFRPGFDVSQGAGGRASKFGDVVAPTSSTQLPG) the chain is on the cytoplasmic side. The chain crosses the membrane as a helical span at residues 37 to 57 (IILRIVAIVLTFISAVVMGAA). Residues 58–87 (RQTTTVTGIDAETALLTSITVTVKSTYSAA) lie on the Extracellular side of the membrane. A helical membrane pass occupies residues 88-108 (YVYFVVANVLVFFYSVVSLVL). Residues 109–127 (SMVNKARLTSMSLPFSIAD) are Cytoplasmic-facing. A helical transmembrane segment spans residues 128–148 (LLMVVLLFSSNGAAAAISVVA). Residues 149-173 (EKGQQNLAGWDKICNLFGGLCARVN) are Extracellular-facing. The chain crosses the membrane as a helical span at residues 174–194 (AAIVLSMLASVAYVILVVFGM). The Cytoplasmic portion of the chain corresponds to 195–201 (ANLRRSQ).

The protein belongs to the Casparian strip membrane proteins (CASP) family. As to quaternary structure, homodimer and heterodimers.

It localises to the cell membrane. This is CASP-like protein 1E1 from Musa acuminata (Banana).